Consider the following 402-residue polypeptide: LIM/homeobox protein Lhx5 (402 aa).

LIM zinc-binding domains follow at residues Val-3–Gly-61 and Thr-62–Leu-125. Positions Ser-124–Pro-148 are enriched in low complexity. 2 disordered regions span residues Ser-124 to Thr-186 and His-298 to Trp-402. Residues Asp-151 to Ala-167 are compositionally biased toward basic and acidic residues. Positions Arg-180–Lys-239 form a DNA-binding region, homeobox. Low complexity-rich tracts occupy residues Pro-300–Ser-311 and Pro-322–Ala-336.

The protein resides in the nucleus. Plays an essential role in the regulation of neuronal differentiation and migration during development of the central nervous system. This is LIM/homeobox protein Lhx5 (Lhx5) from Mus musculus (Mouse).